A 429-amino-acid polypeptide reads, in one-letter code: Adenylosuccinate synthetase (429 aa).

Residues 12-18 (GDEGKGK) and 40-42 (GHT) each bind GTP. D13 functions as the Proton acceptor in the catalytic mechanism. D13 and G40 together coordinate Mg(2+). IMP-binding positions include 13 to 16 (DEGK), 38 to 41 (NAGH), T128, R142, Q223, T238, and R302. The active-site Proton donor is the H41. A substrate-binding site is contributed by 298–304 (TVTGRPR). Residues R304, 330–332 (LLD), and 412–414 (SVG) each bind GTP.

Belongs to the adenylosuccinate synthetase family. Homodimer. The cofactor is Mg(2+).

It is found in the cytoplasm. The enzyme catalyses IMP + L-aspartate + GTP = N(6)-(1,2-dicarboxyethyl)-AMP + GDP + phosphate + 2 H(+). Its pathway is purine metabolism; AMP biosynthesis via de novo pathway; AMP from IMP: step 1/2. In terms of biological role, plays an important role in the de novo pathway of purine nucleotide biosynthesis. Catalyzes the first committed step in the biosynthesis of AMP from IMP. The chain is Adenylosuccinate synthetase from Lactobacillus helveticus (strain DPC 4571).